Reading from the N-terminus, the 213-residue chain is MEKMRVVLITLLLFIGAAVAEKAGNGKAANNPAEDASDGEHNLVEEAGGIGDAITPAEGKALISAYESARFKKFVTHCSSHVAQTCSGNDPLHASGRCHGINVPLGLSFCLFDSMEKCLGDHEAKLIDPNPGPMSAIPNSIQSQQLLIETVKFRTVLKTCTRVSAKFCLSAPNVDTSVLPACLGPSLNQCVYPAADAFTPGPPLELPPIIIMN.

An N-terminal signal peptide occupies residues 1–20; sequence MEKMRVVLITLLLFIGAAVA.

This sequence belongs to the nodulin 20 family.

The protein is Nodulin-27 of Glycine max (Soybean).